A 187-amino-acid polypeptide reads, in one-letter code: MVMHSEDEPYKCKFCGKAFDNLHLYLTHERTHTGEKPYECNKCGKAFSCSSSIRKHARIHTGEKPYICKQCGKAFRYSSSIRNHENTHTGEKPCECKQCGKAFSYSSYFRIHERIHTGEQVYKCKECGKTFTYPSAFHKHKSTHTSQKLYECKECGKAFDCFSSFHSHEGVHTGEKPYECRTWKSLQ.

6 C2H2-type zinc fingers span residues 10 to 32 (YKCK…ERTH), 38 to 60 (YECN…ARIH), 66 to 88 (YICK…ENTH), 94 to 116 (CECK…ERIH), 122 to 144 (YKCK…KSTH), and 150 to 172 (YECK…EGVH).

This is Putative zinc finger protein 833 (ZNF833P) from Homo sapiens (Human).